Consider the following 589-residue polypeptide: Isocitrate dehydrogenase kinase/phosphatase (589 aa).

ATP contacts are provided by residues 317–323 (AAGIKGM) and Lys338. Asp373 is a catalytic residue.

Belongs to the AceK family.

It localises to the cytoplasm. The enzyme catalyses L-seryl-[isocitrate dehydrogenase] + ATP = O-phospho-L-seryl-[isocitrate dehydrogenase] + ADP + H(+). Its function is as follows. Bifunctional enzyme which can phosphorylate or dephosphorylate isocitrate dehydrogenase (IDH) on a specific serine residue. This is a regulatory mechanism which enables bacteria to bypass the Krebs cycle via the glyoxylate shunt in response to the source of carbon. When bacteria are grown on glucose, IDH is fully active and unphosphorylated, but when grown on acetate or ethanol, the activity of IDH declines drastically concomitant with its phosphorylation. The chain is Isocitrate dehydrogenase kinase/phosphatase from Colwellia psychrerythraea (strain 34H / ATCC BAA-681) (Vibrio psychroerythus).